Here is a 906-residue protein sequence, read N- to C-terminus: MPLRLDIKRKLTARSDRVKSVDLHPTEPWMLASLYNGSVCVWNHETQTLVKTFEVCDLPVRAAKFVARKNWVVTGADDMQIRVFNYNTLERVHMFEAHSDYIRCIAVHPTQPFILTSSDDMLIKLWDWDKKWSCSQVFEGHTHYVMQIVINPKDNNQFASASLDRTIKVWQLGSSSPNFTLEGHEKGVNCIDYYSGGDKPYLISGADDRLVKIWDYQNKTCVQTLEGHAQNVSCASFHPELPIIITGSEDGTVRIWHSSTYRLESTLNYGMERVWCVASLRGSNNVALGCDEGSIIVKLGREEPAMSMDANGKIIWAKHSEVQQANLKAMGNAEIKDGERLPLAVKDMGSCEIYPQTIQHNPNGRFVVVCGDGEYIIYTAMALRNKSFGSAQEFAWAHDSSEYAIRESNSVVKIFKNFKEKKSFKPDFGAESIYGGFLLGVRSVNGLAFYDWDNTELIRRIEIQPKHIFWSGSGELVCIATEESFFILKYLSEKVLAAQETHEGVTEDGIEDAFEVLGEIQEIVKTGLWVGDCFIYTSSVNRLNYYVGGEIVTIAHLDRTMYLLGYIPKDNRLYLGDKELNIVSYSLLVSVLEYQTAVMRRDFSMADKVLPTIPKEQRTRVAHFLEKQGFKQQALTVSTDPEHRFELALQLGELKIAYQLAVEAESEQKWKQLAELAISKCQFGLAQECLHHAQDYGGLLLLATASGNANMVNKLAEGAERDGKNNVAFMSYFLQGKVDACLELLIRTGRLPEAAFLARTYLPSQVSRVVKLWRENLSKVNQKAAESLADPTEYENLFPGLKEAFVVEEWVKETHADLWPAKQHPLVTPNEERNVMEEAKGFQPSRSTAQQELDGKPASPTPVIVASHTANKEEKSLLELEVDLDNLELEDIDTTDINLDEDILDD.

8 WD repeats span residues 13-52, 55-94, 97-136, 140-180, 183-224, 227-266, 350-388, and 390-425; these read ARSD…LVKT, VCDL…RVHM, AHSD…SCSQ, GHTH…PNFT, GHEK…CVQT, GHAQ…LEST, SCEI…NKSF, and SAQE…KSFK. N6-acetyllysine is present on K627. The WD 9 repeat unit spans residues 746–783; sequence IRTGRLPEAAFLARTYLPSQVSRVVKLWRENLSKVNQK. Residues 837–862 form a disordered region; that stretch reads EEAKGFQPSRSTAQQELDGKPASPTP. Position 859 is a phosphoserine (S859). Phosphothreonine is present on T861. The stretch at 866–890 forms a coiled coil; that stretch reads ASHTANKEEKSLLELEVDLDNLELE.

This sequence belongs to the WD repeat COPB2 family. In terms of assembly, oligomeric complex that consists of at least the alpha, beta, beta', gamma, delta, epsilon and zeta subunits. Probably interacts with PEX11A. Interacts with SCYL1. Interacts with JAGN1.

It localises to the cytoplasm. Its subcellular location is the cytosol. It is found in the golgi apparatus membrane. The protein resides in the cytoplasmic vesicle. The protein localises to the COPI-coated vesicle membrane. In terms of biological role, the coatomer is a cytosolic protein complex that binds to dilysine motifs and reversibly associates with Golgi non-clathrin-coated vesicles, which further mediate biosynthetic protein transport from the ER, via the Golgi up to the trans Golgi network. Coatomer complex is required for budding from Golgi membranes, and is essential for the retrograde Golgi-to-ER transport of dilysine-tagged proteins. In mammals, the coatomer can only be recruited by membranes associated to ADP-ribosylation factors (ARFs), which are small GTP-binding proteins; the complex also influences the Golgi structural integrity, as well as the processing, activity, and endocytic recycling of LDL receptors. This coatomer complex protein, essential for Golgi budding and vesicular trafficking, is a selective binding protein (RACK) for protein kinase C, epsilon type. It binds to Golgi membranes in a GTP-dependent manner. This chain is Coatomer subunit beta' (COPB2), found in Macaca fascicularis (Crab-eating macaque).